A 346-amino-acid polypeptide reads, in one-letter code: Nucleoplasmin-like protein ANO39 (346 aa).

The residue at position 2 (Ser2) is an N-acetylserine. Asn85 carries N-linked (GlcNAc...) asparagine glycosylation. The span at 123–141 (DEEELEEDDEEEEEEDEVE) shows a compositional bias: acidic residues. Positions 123–285 (DEEELEEDDE…KAKAKTDTKL (163 aa)) are disordered. Ser145 bears the Phosphoserine; by CDC2 mark. The span at 171–180 (AKLDKDADKK) shows a compositional bias: basic and acidic residues. The segment covering 181 to 247 (EDDDEEEDDE…EEEEDEDEES (67 aa)) has biased composition (acidic residues). Residue Asn264 is glycosylated (N-linked (GlcNAc...) asparagine). A compositionally biased stretch (basic and acidic residues) spans 271 to 285 (GDNKPKAKAKTDTKL).

Belongs to the nucleoplasmin family. Post-translationally, phosphorylation occurs in oocytes during the progression of the first meiotic M phase. No phosphorylation is observed in immature oocytes. As to expression, expressed specifically in the oocytes of the ovaries.

The protein localises to the nucleus. The protein resides in the nucleolus. It is found in the cytoplasm. In terms of biological role, binds double-stranded RNA and both single-stranded and double-stranded DNA. This is Nucleoplasmin-like protein ANO39 from Patiria pectinifera (Starfish).